A 148-amino-acid polypeptide reads, in one-letter code: Putative HTH-type transcriptional regulator NMA1593 (148 aa).

Residues 2-131 enclose the HTH rrf2-type domain; the sequence is RLTTKGRFAV…GSVTLQSIIE (130 aa).

The protein is Putative HTH-type transcriptional regulator NMA1593 of Neisseria meningitidis serogroup A / serotype 4A (strain DSM 15465 / Z2491).